The chain runs to 115 residues: Cyclin-dependent protein kinase inhibitor SMR3 (115 aa).

Positions 17-36 (KIRLPTRPELDIPDSDHEDP) are enriched in basic and acidic residues. The interval 17–82 (KIRLPTRPEL…RSSGTKRKLT (66 aa)) is disordered. A compositionally biased stretch (basic residues) spans 67–81 (RKPKPNRSSGTKRKL).

In terms of assembly, interacts with CDKA-1 and D-type cyclins. Expressed at low levels in roots and stems.

The protein resides in the nucleus. Probable cyclin-dependent protein kinase (CDK) inhibitor that functions as a repressor of mitosis in the endoreduplication cell cycle. This chain is Cyclin-dependent protein kinase inhibitor SMR3, found in Arabidopsis thaliana (Mouse-ear cress).